We begin with the raw amino-acid sequence, 538 residues long: Fusion glycoprotein F0 (538 aa).

The first 19 residues, 1–19 (MKAFPVICLGFAIFSSSIC), serve as a signal peptide directing secretion. Residues 20–486 (VNINILQQIG…VSVSSKIGAI (467 aa)) lie on the Extracellular side of the membrane. Residues Asn56, Asn73, and Asn89 are each glycosylated (N-linked (GlcNAc...) asparagine; by host). Positions 103–127 (FAGIAIGIAALGVATAAQVTAAVSL) are fusion peptide. Residues 128 to 156 (VQAQTNARAIAAMKNSIQATNRAVFEVKE) are a coiled coil. N-linked (GlcNAc...) asparagine; by host glycosylation occurs at Asn182. 4 disulfides stabilise this stretch: Cys324–Cys333, Cys348–Cys356, Cys380–Cys385, and Cys387–Cys410. N-linked (GlcNAc...) asparagine; by host glycosylation occurs at Asn352. N-linked (GlcNAc...) asparagine; by host glycans are attached at residues Asn427, Asn433, and Asn457. The stretch at 452 to 477 (ELSKVNASLQNAVKYIKESNHQLQSV) forms a coiled coil. A helical transmembrane segment spans residues 487-507 (IVAALVLSILSIIISLLFCFW). Over 508–538 (AYIATKEIRRINFKTNHINTISSSVDDLIRY) the chain is Cytoplasmic.

The protein belongs to the paramyxoviruses fusion glycoprotein family. Homotrimer; disulfide-linked F1-F2. Interacts with host LAMP1; LAMP2 and LAMP3; these interactions promote the cleavage of the viral fusion protein F. The inactive precursor F0 is glycosylated and proteolytically cleaved into F1 and F2 to be functionally active. The cleavage is mediated by cellular proteases including host FURIN during the transport and maturation of the polypeptide.

The protein resides in the virion membrane. Its subcellular location is the host cell membrane. Class I viral fusion protein. Under the current model, the protein has at least 3 conformational states: pre-fusion native state, pre-hairpin intermediate state, and post-fusion hairpin state. During viral and plasma cell membrane fusion, the heptad repeat (HR) regions assume a trimer-of-hairpins structure, positioning the fusion peptide in close proximity to the C-terminal region of the ectodomain. The formation of this structure appears to drive apposition and subsequent fusion of viral and plasma cell membranes. Directs fusion of viral and cellular membranes leading to delivery of the nucleocapsid into the cytoplasm. This fusion is pH independent and occurs directly at the outer cell membrane. The trimer of F1-F2 (F protein) probably interacts with HN at the virion surface. Upon HN binding to its cellular receptor, the hydrophobic fusion peptide is unmasked and interacts with the cellular membrane, inducing the fusion between cell and virion membranes. Later in infection, F proteins expressed at the plasma membrane of infected cells could mediate fusion with adjacent cells to form syncytia, a cytopathic effect that could lead to tissue necrosis. The protein is Fusion glycoprotein F0 (F) of Homo sapiens (Human).